A 234-amino-acid polypeptide reads, in one-letter code: 2,3,4,5-tetrahydropyridine-2,6-dicarboxylate N-acetyltransferase (234 aa).

The protein belongs to the transferase hexapeptide repeat family. DapH subfamily.

The enzyme catalyses (S)-2,3,4,5-tetrahydrodipicolinate + acetyl-CoA + H2O = L-2-acetamido-6-oxoheptanedioate + CoA. It participates in amino-acid biosynthesis; L-lysine biosynthesis via DAP pathway; LL-2,6-diaminopimelate from (S)-tetrahydrodipicolinate (acetylase route): step 1/3. Functionally, catalyzes the transfer of an acetyl group from acetyl-CoA to tetrahydrodipicolinate. In Lacticaseibacillus paracasei (strain ATCC 334 / BCRC 17002 / CCUG 31169 / CIP 107868 / KCTC 3260 / NRRL B-441) (Lactobacillus paracasei), this protein is 2,3,4,5-tetrahydropyridine-2,6-dicarboxylate N-acetyltransferase.